A 437-amino-acid chain; its full sequence is Phosphomethylpyrimidine synthase (437 aa).

Substrate is bound by residues asparagine 69, methionine 98, tyrosine 127, histidine 163, serine 185 to glycine 187, aspartate 226 to arginine 229, and glutamate 265. Histidine 269 contributes to the Zn(2+) binding site. Tyrosine 292 provides a ligand contact to substrate. Residue histidine 333 participates in Zn(2+) binding. Positions 409, 412, and 416 each coordinate [4Fe-4S] cluster.

Belongs to the ThiC family. The cofactor is [4Fe-4S] cluster.

The catalysed reaction is 5-amino-1-(5-phospho-beta-D-ribosyl)imidazole + S-adenosyl-L-methionine = 4-amino-2-methyl-5-(phosphooxymethyl)pyrimidine + CO + 5'-deoxyadenosine + formate + L-methionine + 3 H(+). Its pathway is cofactor biosynthesis; thiamine diphosphate biosynthesis. Functionally, catalyzes the synthesis of the hydroxymethylpyrimidine phosphate (HMP-P) moiety of thiamine from aminoimidazole ribotide (AIR) in a radical S-adenosyl-L-methionine (SAM)-dependent reaction. The polypeptide is Phosphomethylpyrimidine synthase (Clostridium botulinum (strain Langeland / NCTC 10281 / Type F)).